The primary structure comprises 321 residues: Holliday junction branch migration complex subunit RuvB (321 aa).

A large ATPase domain (RuvB-L) region spans residues 1-173; it reads MMMEQECVDD…FGIISRLEFY (173 aa). Residues I12, R13, G54, K57, T58, T59, 120–122, R163, Y173, and R210 contribute to the ATP site; that span reads EDF. Mg(2+) is bound at residue T58. The tract at residues 174–244 is small ATPAse domain (RuvB-S); it reads TPAELACIVK…LASDALARMD (71 aa). The head domain (RuvB-H) stretch occupies residues 247 to 321; the sequence is ELGLDQMDRK…KAYRHMNLLA (75 aa). The DNA site is built by R302 and R307.

Belongs to the RuvB family. As to quaternary structure, homohexamer. Forms an RuvA(8)-RuvB(12)-Holliday junction (HJ) complex. HJ DNA is sandwiched between 2 RuvA tetramers; dsDNA enters through RuvA and exits via RuvB. An RuvB hexamer assembles on each DNA strand where it exits the tetramer. Each RuvB hexamer is contacted by two RuvA subunits (via domain III) on 2 adjacent RuvB subunits; this complex drives branch migration. In the full resolvosome a probable DNA-RuvA(4)-RuvB(12)-RuvC(2) complex forms which resolves the HJ.

The protein resides in the cytoplasm. The enzyme catalyses ATP + H2O = ADP + phosphate + H(+). Its function is as follows. The RuvA-RuvB-RuvC complex processes Holliday junction (HJ) DNA during genetic recombination and DNA repair, while the RuvA-RuvB complex plays an important role in the rescue of blocked DNA replication forks via replication fork reversal (RFR). RuvA specifically binds to HJ cruciform DNA, conferring on it an open structure. The RuvB hexamer acts as an ATP-dependent pump, pulling dsDNA into and through the RuvAB complex. RuvB forms 2 homohexamers on either side of HJ DNA bound by 1 or 2 RuvA tetramers; 4 subunits per hexamer contact DNA at a time. Coordinated motions by a converter formed by DNA-disengaged RuvB subunits stimulates ATP hydrolysis and nucleotide exchange. Immobilization of the converter enables RuvB to convert the ATP-contained energy into a lever motion, pulling 2 nucleotides of DNA out of the RuvA tetramer per ATP hydrolyzed, thus driving DNA branch migration. The RuvB motors rotate together with the DNA substrate, which together with the progressing nucleotide cycle form the mechanistic basis for DNA recombination by continuous HJ branch migration. Branch migration allows RuvC to scan DNA until it finds its consensus sequence, where it cleaves and resolves cruciform DNA. This is Holliday junction branch migration complex subunit RuvB from Oleidesulfovibrio alaskensis (strain ATCC BAA-1058 / DSM 17464 / G20) (Desulfovibrio alaskensis).